The chain runs to 680 residues: Structure-specific endonuclease subunit SLX4 (680 aa).

3 disordered regions span residues 15–92 (EVAK…EPVV), 141–183 (ESSS…STQQ), and 450–490 (LGSG…ATRL). Residues 22–33 (DSDEPIIDEDDL) are compositionally biased toward acidic residues. Basic and acidic residues predominate over residues 60 to 86 (NNSKDTFKETPLELVDKEEAIEDKAPN). Positions 156–174 (LKSKKITKPKLTKTSKRTK) are enriched in basic residues. Residues 473–490 (TVISRSPQSTRTPQATRL) are compositionally biased toward polar residues.

Belongs to the SLX4 family. Forms a heterodimer with SLX1. Phosphorylated in response to DNA damage.

Its subcellular location is the nucleus. Its function is as follows. Regulatory subunit of the SLX1-SLX4 structure-specific endonuclease that resolves DNA secondary structures generated during DNA repair and recombination. Has endonuclease activity towards branched DNA substrates, introducing single-strand cuts in duplex DNA close to junctions with ss-DNA. The polypeptide is Structure-specific endonuclease subunit SLX4 (Vanderwaltozyma polyspora (strain ATCC 22028 / DSM 70294 / BCRC 21397 / CBS 2163 / NBRC 10782 / NRRL Y-8283 / UCD 57-17) (Kluyveromyces polysporus)).